The chain runs to 480 residues: Endothelial transcription factor GATA-2 (480 aa).

Serine 73 carries the phosphoserine modification. Arginine 86 bears the Asymmetric dimethylarginine mark. Residues 166–208 (SGSHLFGFPPTPPKEVSPDPSTTGAASPASSSAGGSVARGEDK) are disordered. Residues 183 to 201 (PDPSTTGAASPASSSAGGS) are compositionally biased toward low complexity. The residue at position 192 (serine 192) is a Phosphoserine. 2 consecutive GATA-type zinc fingers follow at residues 295–319 (CVNCGATATPLWRRDGTGHYLCNAC) and 349–373 (CANCQTTTTTLWRRNANGDPVCNAC). Residue lysine 389 forms a Glycyl lysine isopeptide (Lys-Gly) (interchain with G-Cter in SUMO2) linkage. The interval 457 to 480 (TPIHPSSSLSFGHPHPSSMVTAMG) is disordered.

Interacts with BRD3. Interacts with AR and CCAR1. Interacts with MDFIC.

It localises to the nucleus. Functionally, transcriptional activator which regulates endothelin-1 gene expression in endothelial cells. Binds to the consensus sequence 5'-AGATAG-3'. In Mus musculus (Mouse), this protein is Endothelial transcription factor GATA-2 (Gata2).